Reading from the N-terminus, the 228-residue chain is Superoxide dismutase [Mn], mitochondrial (228 aa).

Residues 1–24 (MALRNLMTKKPFAGILTFRQQLRC) constitute a mitochondrion transit peptide. Mn(2+) contacts are provided by histidine 52, histidine 100, aspartate 189, and histidine 193.

The protein belongs to the iron/manganese superoxide dismutase family. In terms of assembly, homotetramer. The cofactor is Mn(2+).

The protein localises to the mitochondrion matrix. It carries out the reaction 2 superoxide + 2 H(+) = H2O2 + O2. Functionally, destroys superoxide anion radicals which are normally produced within the cells and which are toxic to biological systems. This is Superoxide dismutase [Mn], mitochondrial (SODA) from Capsicum annuum (Capsicum pepper).